The following is an 87-amino-acid chain: Small ribosomal subunit protein uS17 (87 aa).

This sequence belongs to the universal ribosomal protein uS17 family. As to quaternary structure, part of the 30S ribosomal subunit.

In terms of biological role, one of the primary rRNA binding proteins, it binds specifically to the 5'-end of 16S ribosomal RNA. This chain is Small ribosomal subunit protein uS17, found in Neisseria gonorrhoeae (strain ATCC 700825 / FA 1090).